A 506-amino-acid chain; its full sequence is Alpha-L-arabinofuranosidase B (506 aa).

A signal peptide spans 1–26 (MSSGLSLERACAVALGIVASASLVAA). The tract at residues 27-343 (GPCDIYSSGG…ADIVAAKYAI (317 aa)) is catalytic. 3 disulfide bridges follow: Cys-29–Cys-39, Cys-89–Cys-94, and Cys-184–Cys-185. Asn-91 is a glycosylation site (N-linked (GlcNAc...) asparagine). Position 227 (Asp-227) interacts with substrate. The Nucleophile role is filled by Glu-229. 2 residues coordinate substrate: Asn-230 and Gly-304. The active-site Proton donor is Asp-305. The interval 344–506 (ASLTSGPALT…VSWVVSTGFA (163 aa)) is ABD. An intrachain disulfide couples Cys-409 to Cys-447. Residues His-424, Asn-426, Phe-427, Asp-443, His-471, Glu-473, Leu-476, and Asp-496 each contribute to the substrate site.

The protein belongs to the glycosyl hydrolase 54 family.

The protein resides in the secreted. The enzyme catalyses Hydrolysis of terminal non-reducing alpha-L-arabinofuranoside residues in alpha-L-arabinosides.. It functions in the pathway glycan metabolism; L-arabinan degradation. Its function is as follows. Alpha-L-arabinofuranosidase involved in the degradation of arabinoxylan, a major component of plant hemicellulose. Able to hydrolyze 1,5-, 1,3- and 1,2-alpha-linkages not only in L-arabinofuranosyl oligosaccharides, but also in polysaccharides containing terminal non-reducing L-arabinofuranoses in side chains, like L-arabinan, arabinogalactan and arabinoxylan. This Aspergillus oryzae (strain ATCC 42149 / RIB 40) (Yellow koji mold) protein is Alpha-L-arabinofuranosidase B (abfB).